A 195-amino-acid polypeptide reads, in one-letter code: Myelin basic protein (195 aa).

Residue Ala-2 is modified to N-acetylalanine. 2 positions are modified to phosphoserine: Ser-8 and Ser-13. Residue Tyr-15 is modified to Phosphotyrosine. Phosphothreonine is present on Thr-18. Phosphoserine is present on Ser-20. Thr-21 carries the post-translational modification Phosphothreonine. Citrulline is present on residues Arg-26 and Arg-32. Position 36 is a phosphothreonine (Thr-36). Phosphoserine is present on Ser-41. An omega-N-methylarginine mark is found at Arg-44 and Arg-50. Residues 45-79 (FFSGDRGAPKRGSGKVPWLKQSRSPLPSHARSRPG) are disordered. Ser-57 is subject to Phosphoserine. Residue Thr-92 is modified to Phosphothreonine. Tyr-94 is modified (phosphotyrosine). Ser-101 is subject to Phosphoserine. Residues Thr-104, Thr-119, and Thr-122 each carry the phosphothreonine modification. A disordered region spans residues 117–139 (IVTPRTPPPSQGKGRGLSLSRFS). At Gln-127 the chain carries Deamidated glutamine. An Omega-N-methylarginine; alternate modification is found at Arg-131. At Arg-131 the chain carries Symmetric dimethylarginine; alternate. Ser-139 is subject to Phosphoserine. Lys-146 is modified (N6-acetyllysine). A Citrulline modification is found at Arg-154. Gln-172 bears the Deamidated glutamine mark. At Arg-184 the chain carries Citrulline. Phosphoserine is present on Ser-186. Residue Ser-190 is modified to Phosphoserine; by UHMK1. Residue Arg-195 is modified to Citrulline.

It belongs to the myelin basic protein family. As to quaternary structure, homodimer. Post-translationally, as in other animals, several charge isomers may be produced as a result of optional post-translational modifications, such as phosphorylation of serine or threonine residues, deamidation of glutamine or asparagine residues, citrullination and methylation of arginine residues. In terms of processing, arg-131 was found to be 44% monomethylated and 11% symmetrically dimethylated. Phosphorylated by TAOK2, VRK2, MAPK11, MAPK12, MAPK14 and MINK1. Post-translationally, proteolytically cleaved in B cell lysosomes by cathepsin CTSG which degrades the major immunogenic MBP epitope and prevents the activation of MBP-specific autoreactive T cells. Found in both the central and the peripheral nervous system.

It is found in the myelin membrane. Its function is as follows. Is, with PLP, the most abundant protein component of the myelin membrane in the CNS. Has a role in both the formation and stabilization of this compact multilayer arrangement of bilayers. Each splice variant and charge isomer may have a specialized function in the assembly of an optimized, biochemically functional myelin membrane. This is Myelin basic protein (Mbp) from Rattus norvegicus (Rat).